We begin with the raw amino-acid sequence, 290 residues long: Acetyl-coenzyme A carboxylase carboxyl transferase subunit beta (290 aa).

One can recognise a CoA carboxyltransferase N-terminal domain in the interval 28–290; sequence LMNKCSKCGT…TVREGLSHGG (263 aa). Cysteine 32, cysteine 35, cysteine 51, and cysteine 54 together coordinate Zn(2+). The C4-type zinc finger occupies 32–54; the sequence is CSKCGTIQYSKELDKNLKVCSSC.

This sequence belongs to the AccD/PCCB family. Acetyl-CoA carboxylase is a heterohexamer composed of biotin carboxyl carrier protein (AccB), biotin carboxylase (AccC) and two subunits each of ACCase subunit alpha (AccA) and ACCase subunit beta (AccD). Requires Zn(2+) as cofactor.

The protein localises to the cytoplasm. The catalysed reaction is N(6)-carboxybiotinyl-L-lysyl-[protein] + acetyl-CoA = N(6)-biotinyl-L-lysyl-[protein] + malonyl-CoA. Its pathway is lipid metabolism; malonyl-CoA biosynthesis; malonyl-CoA from acetyl-CoA: step 1/1. Functionally, component of the acetyl coenzyme A carboxylase (ACC) complex. Biotin carboxylase (BC) catalyzes the carboxylation of biotin on its carrier protein (BCCP) and then the CO(2) group is transferred by the transcarboxylase to acetyl-CoA to form malonyl-CoA. This Paenibacillus sp. (strain JDR-2) protein is Acetyl-coenzyme A carboxylase carboxyl transferase subunit beta.